Reading from the N-terminus, the 468-residue chain is Glucose-dependent insulinotropic receptor (468 aa).

At 1–6 (MESSFS) the chain is on the extracellular side. The chain crosses the membrane as a helical span at residues 7-27 (FGVILAVLTILIIAVNALVVV). Topologically, residues 28 to 37 (AMLLSIYKND) are cytoplasmic. A helical membrane pass occupies residues 38–58 (GVGLCFTLNLAVADTLIGVAI). At 59-81 (SGLVTDQLSSSAQHTQKTLCSLR) the chain is on the extracellular side. Residues 82–102 (MAFVTSSAAASVLTVMLIAFD) traverse the membrane as a helical segment. The Cytoplasmic segment spans residues 103–125 (RYLAIKQPLRYFQIMNGLVAGGC). A helical membrane pass occupies residues 126-146 (IAGLWLISYLIGFLPLGVSIF). The Extracellular segment spans residues 147 to 164 (QQTTYHGPCTFFAVFHPR). Residues 165–185 (FVLTLSCAGFFPAVLLFVFFY) traverse the membrane as a helical segment. Over 186–226 (CDMLKIASVHSQHIRKMEHAGAMVGACRPPRPVNDFKAVRT) the chain is Cytoplasmic. A helical membrane pass occupies residues 227–247 (VSVLIGSFTLSWSPFLITSIV). Over 248-262 (QVACHKCCLYQVLEK) the chain is Extracellular. The chain crosses the membrane as a helical span at residues 263–283 (YLWLLGVGNSLLNPLIYAYWQ). Residues 284–468 (REVRQQLCHM…MSDPLRTCRG (185 aa)) lie on the Cytoplasmic side of the membrane.

Belongs to the G-protein coupled receptor 1 family. In terms of tissue distribution, expression restricted to the beta-cells of pancreatic islets.

The protein resides in the cell membrane. Receptor for the endogenous fatty-acid ethanolamide oleoylethanolamide (OEA) and lysophosphatidylcholine (LPC). Functions as a glucose-dependent insulinotropic receptor. The activity of this receptor is mediated by G proteins which activate adenylate cyclase. Seems to act through a G(s) mediated pathway. The protein is Glucose-dependent insulinotropic receptor (Gpr119) of Rattus norvegicus (Rat).